A 177-amino-acid polypeptide reads, in one-letter code: Large ribosomal subunit protein uL6 (177 aa).

A disordered region spans residues 157 to 177 (YKGKGVRYAGEKVRRKEGKKK).

It belongs to the universal ribosomal protein uL6 family. Part of the 50S ribosomal subunit.

Its function is as follows. This protein binds to the 23S rRNA, and is important in its secondary structure. It is located near the subunit interface in the base of the L7/L12 stalk, and near the tRNA binding site of the peptidyltransferase center. The protein is Large ribosomal subunit protein uL6 of Caulobacter vibrioides (strain ATCC 19089 / CIP 103742 / CB 15) (Caulobacter crescentus).